Here is a 488-residue protein sequence, read N- to C-terminus: (Z)-2-((N-methylformamido)methylene)-5-hydroxybutyrolactone dehydrogenase (488 aa).

Residues 149–150 (WN) and 226–227 (GG) each bind NAD(+). Catalysis depends on E248, which acts as the Proton acceptor. NAD(+) is bound at residue L249. C282 acts as the Nucleophile in catalysis. NAD(+) is bound at residue E380.

The protein belongs to the aldehyde dehydrogenase family. Homodimer.

The enzyme catalyses (Z)-2-((N-methylformamido)methylene)-5-hydroxybutanolactone + NAD(+) + H2O = (E)-2-((N-methylformamido) methylene)succinate + NADH + 3 H(+). In terms of biological role, involved in the degradation of the pyridine ring of trigonelline (TG; N-methylnicotinate) into succinate and methylamine as carbon and nitrogen sources, respectively. Catalyzes the NAD(+)-dependent oxidation of (Z)-2-((N-methylformamido)methylene)-5-hydroxybutyrolactone (MFMB) to yield (E)-2-((N-methylformamido)methylene)succinate (MFMS). This Acinetobacter baylyi (strain ATCC 33305 / BD413 / ADP1) protein is (Z)-2-((N-methylformamido)methylene)-5-hydroxybutyrolactone dehydrogenase.